The sequence spans 341 residues: S-adenosylmethionine:tRNA ribosyltransferase-isomerase (341 aa).

Belongs to the QueA family. In terms of assembly, monomer.

It localises to the cytoplasm. The catalysed reaction is 7-aminomethyl-7-carbaguanosine(34) in tRNA + S-adenosyl-L-methionine = epoxyqueuosine(34) in tRNA + adenine + L-methionine + 2 H(+). It participates in tRNA modification; tRNA-queuosine biosynthesis. Functionally, transfers and isomerizes the ribose moiety from AdoMet to the 7-aminomethyl group of 7-deazaguanine (preQ1-tRNA) to give epoxyqueuosine (oQ-tRNA). The polypeptide is S-adenosylmethionine:tRNA ribosyltransferase-isomerase (Staphylococcus saprophyticus subsp. saprophyticus (strain ATCC 15305 / DSM 20229 / NCIMB 8711 / NCTC 7292 / S-41)).